The sequence spans 471 residues: Metalloprotease TIKI homolog (471 aa).

An N-terminal signal peptide occupies residues 1–24; the sequence is MAAFTLWILVLNVFLLGFQARKLA. Over 25-449 the chain is Extracellular; the sequence is SNLKFPIQKC…SRKAAASCTP (425 aa). 4 N-linked (GlcNAc...) asparagine glycosylation sites follow: Asn226, Asn235, Asn284, and Asn342. Over residues 369–402 the composition is skewed to basic residues; that stretch reads KAKKSLNTRRERRKGCRGRRKKSKRCQKKKKRKR. Residues 369–406 form a disordered region; it reads KAKKSLNTRRERRKGCRGRRKKSKRCQKKKKRKRPDYS. The chain crosses the membrane as a helical span at residues 450-470; sequence IWTVSLALTCAVTCLLTYSGF. Residue Arg471 is a topological domain, cytoplasmic.

Belongs to the TIKI family. The cofactor is Mn(2+). Requires Co(2+) as cofactor.

It is found in the membrane. In terms of biological role, metalloprotease. The chain is Metalloprotease TIKI homolog from Nematostella vectensis (Starlet sea anemone).